Consider the following 602-residue polypeptide: MSKKKTNRKNNIDDIKNQLQNAKTELKNGTFFFTGKMSIFEFANKTNLNANEIVKNFFLAGKLYNINHILEEEEIAQLCIENNFEFSKETKIDGTNFLDEISFEDKPEDLIKRAPIITIMGHVDHGKTSLIDKIRNSNITKSESSGITQHTGAYQIVHKNQKITFIDTPGHEAFSAMRARGANVTDIVVLVVAADDGVMPQTVEAIKHCKNANVPIIVFVNKMDKPNKDLDKLKGQLAENGVVIEEYGGSVQTAYGSALKNEGIKELFDEILLLCEVLDLKANPKRFPIGTVIESRVDKRIGALTTIIVQNGTLYKGDFLLVGSQYSKIRTLSDENGNAMDSIEPGCPAVVTGFKIPPTAGSKFVGINDEKFAKRLASEKNYQEKINNLYSLSNSNNNSGGKKVINVIIKSDTNGTAEAIKNQLEYLENDEAKIKVISSNVGDITENDLMLAKASDSIIFTFNLKVLPTIRENLKVKKITLISHNVIYKIIEDCKLILDEHVTPIYEEKKIGQAHVIKIFTYSKLGTIAGSMQDTGVVRLGAKVKVYRKNKLIHEGFVQTLKRNLNEVKEVEKGKDFGTHLKDFNNIEVDDVLEFYEDVRVN.

In terms of domain architecture, tr-type G spans 112 to 281; the sequence is KRAPIITIMG…LLLCEVLDLK (170 aa). A G1 region spans residues 121-128; sequence GHVDHGKT. 121-128 lines the GTP pocket; sequence GHVDHGKT. The G2 stretch occupies residues 146-150; the sequence is GITQH. The tract at residues 167-170 is G3; that stretch reads DTPG. Residues 167-171 and 221-224 each bind GTP; these read DTPGH and NKMD. The G4 stretch occupies residues 221–224; sequence NKMD. Residues 257-259 are G5; that stretch reads SAL.

It belongs to the TRAFAC class translation factor GTPase superfamily. Classic translation factor GTPase family. IF-2 subfamily.

The protein resides in the cytoplasm. One of the essential components for the initiation of protein synthesis. Protects formylmethionyl-tRNA from spontaneous hydrolysis and promotes its binding to the 30S ribosomal subunits. Also involved in the hydrolysis of GTP during the formation of the 70S ribosomal complex. In Mycoplasmopsis synoviae (strain 53) (Mycoplasma synoviae), this protein is Translation initiation factor IF-2.